An 868-amino-acid polypeptide reads, in one-letter code: Metabotropic glutamate receptor 6 (868 aa).

Positions 1 to 20 (MARLLLALLAWLAQMSPVRA) are cleaved as a signal peptide. Residues 21–576 (AGSVRLAGGL…VVRLTWSSPW (556 aa)) are Extracellular-facing. Cys48 and Cys90 are oxidised to a cystine. L-glutamate contacts are provided by residues Ser145, 166 to 168 (AST), and Tyr216. 7 disulfides stabilise this stretch: Cys235-Cys527, Cys358-Cys374, Cys414-Cys421, Cys509-Cys528, Cys513-Cys531, Cys534-Cys546, and Cys549-Cys562. An N-linked (GlcNAc...) asparagine glycan is attached at Asn287. An L-glutamate-binding site is contributed by Asp298. Lys391 contacts L-glutamate. N-linked (GlcNAc...) asparagine glycans are attached at residues Asn442 and Asn470. N-linked (GlcNAc...) asparagine glycosylation is present at Asn558. Residues 577-599 (AAPPLLLAVLGIMATTTVVGTFV) traverse the membrane as a helical segment. The Cytoplasmic portion of the chain corresponds to 600-613 (RHNNTPIVRASGRE). The chain crosses the membrane as a helical span at residues 614–634 (LSYVLLTGIFLIYAVTFLMVA). Residues 635–645 (EPGAAVCATRR) lie on the Extracellular side of the membrane. Residues 646–664 (LFLGLGTTLSYSALLTKTN) form a helical membrane-spanning segment. The Cytoplasmic segment spans residues 665-688 (RIYRIFEQGKRSVTPPPFISPTSQ). Residues 689–709 (LVITFSLTSLQVVGVIAWLGA) form a helical membrane-spanning segment. Over 710–739 (QPPHSVIDYEEQRTVDPEQARGVLKCDMSD) the chain is Extracellular. A helical membrane pass occupies residues 740–761 (LSLIGCLGYSLLLMVTCTVYAI). At 762–774 (KARGVPETFNEAK) the chain is on the cytoplasmic side. The chain crosses the membrane as a helical span at residues 775–797 (PIGFTMYTTCIVWLAFVPIFFGT). Residues 798–810 (AQSAEKIYIQTTT) lie on the Extracellular side of the membrane. The chain crosses the membrane as a helical span at residues 811-836 (LTVSLSLSASVSLGMLYVPKTYVILF). Topologically, residues 837-868 (HPEQNVQKRKRSLKTTSTVAAPPKGADTEDPK) are cytoplasmic. Residues 845 to 868 (RKRSLKTTSTVAAPPKGADTEDPK) form a disordered region.

The protein belongs to the G-protein coupled receptor 3 family. In terms of assembly, homodimer. Interacts with GPR179. Interacts with photoreceptor synaptic protein LRIT1 (via its N-terminal extracellular domain).

The protein localises to the cell membrane. Its subcellular location is the endoplasmic reticulum membrane. The protein resides in the golgi apparatus membrane. It localises to the cell projection. It is found in the dendrite. Its function is as follows. G-protein coupled receptor for glutamate. Ligand binding causes a conformation change that triggers signaling via guanine nucleotide-binding proteins (G proteins) and modulates the activity of down-stream effectors, such as adenylate cyclase. Signaling inhibits adenylate cyclase activity. Signaling stimulates TRPM1 channel activity and Ca(2+) uptake. Required for normal vision. The chain is Metabotropic glutamate receptor 6 (GRM6) from Oryctolagus cuniculus (Rabbit).